The chain runs to 347 residues: Phenylalanine--tRNA ligase alpha subunit (347 aa).

Position 265 (E265) interacts with Mg(2+).

It belongs to the class-II aminoacyl-tRNA synthetase family. Phe-tRNA synthetase alpha subunit type 1 subfamily. As to quaternary structure, tetramer of two alpha and two beta subunits. It depends on Mg(2+) as a cofactor.

The protein localises to the cytoplasm. It carries out the reaction tRNA(Phe) + L-phenylalanine + ATP = L-phenylalanyl-tRNA(Phe) + AMP + diphosphate + H(+). This is Phenylalanine--tRNA ligase alpha subunit from Wolbachia pipientis subsp. Culex pipiens (strain wPip).